The sequence spans 775 residues: Mitosis inducer protein kinase cdr2 (775 aa).

One can recognise a Protein kinase domain in the interval 10-262 (WELGLSLGSG…MEQIREHPFL (253 aa)). ATP is bound by residues 16 to 24 (LGSGGPNSS) and lysine 39. The active-site Proton acceptor is aspartate 133. 3 positions are modified to phosphoserine: serine 309, serine 311, and serine 476. Residues 549-563 (NNIDNNNYNQPYANA) are compositionally biased toward low complexity. The segment at 549–620 (NNIDNNNYNQ…TKKKLSGSPF (72 aa)) is disordered. Residues 584 to 593 (LSQSPASYDS) are compositionally biased toward polar residues. Residues serine 587 and serine 632 each carry the phosphoserine modification.

It belongs to the protein kinase superfamily. CAMK Ser/Thr protein kinase family. NIM1 subfamily. In terms of assembly, interacts with blt1 and mid1. Autophosphorylated.

The catalysed reaction is L-seryl-[protein] + ATP = O-phospho-L-seryl-[protein] + ADP + H(+). It carries out the reaction L-threonyl-[protein] + ATP = O-phospho-L-threonyl-[protein] + ADP + H(+). In terms of biological role, acts as a mitotic inducer. In G2 it negatively regulates wee1, a mitotic inhibitor. Also has a role in cytokinesis where it required for proper septum formation. The sequence is that of Mitosis inducer protein kinase cdr2 (cdr2) from Schizosaccharomyces pombe (strain 972 / ATCC 24843) (Fission yeast).